Here is a 56-residue protein sequence, read N- to C-terminus: FAAVSVDCSEYPKPACTLEYRPLCGSDSKTYANKCNFCNAVVESNGTLTLSHFGKC.

The Kazal-like domain occupies 6-56 (VDCSEYPKPACTLEYRPLCGSDSKTYANKCNFCNAVVESNGTLTLSHFGKC). Disulfide bonds link C8–C38, C16–C35, and C24–C56. N45 carries an N-linked (GlcNAc...) asparagine glycan.

It is found in the secreted. This is Ovomucoid from Oreortyx pictus (Mountain quail).